The following is a 93-amino-acid chain: Cell division protein FtsB (93 aa).

Over 1–3 (MRL) the chain is Cytoplasmic. Residues 4 to 21 (FILSLFALLVMFQYDFWF) form a helical membrane-spanning segment. At 22-93 (GKNGYLDYQD…FYRIVKNKNR (72 aa)) the chain is on the periplasmic side. Residues 28–76 (DYQDIKAEIIQRKQENKKLSQRNQTIFAEIQDLKNGIEAIEERARMEHE) adopt a coiled-coil conformation.

Belongs to the FtsB family. Part of a complex composed of FtsB, FtsL and FtsQ.

It localises to the cell inner membrane. Functionally, essential cell division protein. May link together the upstream cell division proteins, which are predominantly cytoplasmic, with the downstream cell division proteins, which are predominantly periplasmic. This chain is Cell division protein FtsB, found in Histophilus somni (strain 129Pt) (Haemophilus somnus).